The sequence spans 360 residues: MKTSMQSKLDQLTTRLAELNDLLSRENVTADLDQYRKLTREHAEIGPVVEHYAQWRQARADELAAQELLADASMRDFAEDELRGARDRMGRLAAELQTMLLPKDPNDERNIFVEIRAGTGGDESALFAGDLLRMYLRYAERQRWQVEMMSESPSDLGGYKEVIVRIAGYGAYSRLKFESGGHRVQRVPATETQGRIHTSACTVAVMPEADEIGEVEINPADLRIDTFRASGAGGQHINKTDSAVRVTHIPTGIVVECQDDRSQHKNKDRALKVLAARIKDKQYHEQHAKEAATRKSLIGSGDRSERIRTYNFPQGRMTDHRINLTLYKLEQIMDGDLDELIAALVSEHQAELLASLGDAE.

Glutamine 235 is modified (N5-methylglutamine).

This sequence belongs to the prokaryotic/mitochondrial release factor family. Methylated by PrmC. Methylation increases the termination efficiency of RF1.

The protein localises to the cytoplasm. Functionally, peptide chain release factor 1 directs the termination of translation in response to the peptide chain termination codons UAG and UAA. The chain is Peptide chain release factor 1 from Burkholderia pseudomallei (strain 1106a).